Here is a 218-residue protein sequence, read N- to C-terminus: Ribosome maturation factor RimM (218 aa).

The 74-residue stretch at 141 to 214 (GELWWDRDLV…HIVVDPPPGL (74 aa)) folds into the PRC barrel domain.

Belongs to the RimM family. In terms of assembly, binds ribosomal protein uS19.

Its subcellular location is the cytoplasm. Functionally, an accessory protein needed during the final step in the assembly of 30S ribosomal subunit, possibly for assembly of the head region. Essential for efficient processing of 16S rRNA. May be needed both before and after RbfA during the maturation of 16S rRNA. It has affinity for free ribosomal 30S subunits but not for 70S ribosomes. In Parafrankia sp. (strain EAN1pec), this protein is Ribosome maturation factor RimM.